The following is a 438-amino-acid chain: MAAGLRKRGQPASVGQPAGIWKQWLQRAWQERYLLLREPRYTLLVASCLCIAEVGITFWVIHRVAYTEIDWKAYMAQVEGFINGTYDYTQLQGDTGPLVYPAGFLYIFTGLFYATDRGTDIPMAQNIFAVLYLVTLVLVFLIYHQTSKVPPFVFFFMCCASYRVHSIFVLRLFNDPVAMALLFLSINLFLAQCWSWGCCCFSLAVSVKMNVLLFAPGLLFLLLTQFGFRGALPKLAICAALQVVLGLPFLLENPIGYLSRSFDLGRQFLFQWTVNWRFLPETIFLHRAFHLALLAAHLSLLLLFALCRWHRTGESILALLKDPSKRKVPPQALTPNQIVSILFTSNFIGICFSRSLHYQFYVWYFHTLPYLLWAMPARWLTHLLRLLVLGLIELSWNTYPSTSFSSAALHLCHAVVLLQLWLSPESFPKSIQPSRKTH.

The residue at position 13 (Ser-13) is a Phosphoserine. 11 consecutive transmembrane segments (helical) span residues 41–61, 95–115, 123–143, 149–169, 172–192, 203–223, 231–251, 289–309, 332–352, 356–376, and 407–427; these read YTLL…FWVI, TGPL…FYAT, MAQN…FLIY, VPPF…SIFV, LFND…FLAQ, LAVS…FLLL, ALPK…PFLL, FHLA…LCRW, ALTP…GICF, LHYQ…WAMP, and AALH…PESF.

Belongs to the glycosyltransferase ALG3 family.

Its subcellular location is the endoplasmic reticulum membrane. The enzyme catalyses an alpha-D-Man-(1-&gt;2)-alpha-D-Man-(1-&gt;2)-alpha-D-Man-(1-&gt;3)-[alpha-D-Man-(1-&gt;6)]-beta-D-Man-(1-&gt;4)-beta-D-GlcNAc-(1-&gt;4)-alpha-D-GlcNAc-diphospho-di-trans,poly-cis-dolichol + a di-trans,poly-cis-dolichyl beta-D-mannosyl phosphate = an alpha-D-Man-(1-&gt;2)-alpha-D-Man-(1-&gt;2)-alpha-D-Man-(1-&gt;3)-[alpha-D-Man-(1-&gt;3)-alpha-D-Man-(1-&gt;6)]-beta-D-Man-(1-&gt;4)-beta-D-GlcNAc-(1-&gt;4)-alpha-D-GlcNAc-diphospho-di-trans,poly-cis-dolichol + a di-trans,poly-cis-dolichyl phosphate + H(+). It functions in the pathway protein modification; protein glycosylation. Dol-P-Man:Man(5)GlcNAc(2)-PP-Dol alpha-1,3-mannosyltransferase that operates in the biosynthetic pathway of dolichol-linked oligosaccharides, the glycan precursors employed in protein asparagine (N)-glycosylation. The assembly of dolichol-linked oligosaccharides begins on the cytosolic side of the endoplasmic reticulum membrane and finishes in its lumen. The sequential addition of sugars to dolichol pyrophosphate produces dolichol-linked oligosaccharides containing fourteen sugars, including two GlcNAcs, nine mannoses and three glucoses. Once assembled, the oligosaccharide is transferred from the lipid to nascent proteins by oligosaccharyltransferases. In the lumen of the endoplasmic reticulum, adds the first dolichyl beta-D-mannosyl phosphate derived mannose in an alpha-1,3 linkage to Man(5)GlcNAc(2)-PP-dolichol to produce Man(6)GlcNAc(2)-PP-dolichol. Man(6)GlcNAc(2)-PP-dolichol is a substrate for ALG9, the following enzyme in the biosynthetic pathway. The sequence is that of Dol-P-Man:Man(5)GlcNAc(2)-PP-Dol alpha-1,3-mannosyltransferase from Mus musculus (Mouse).